The primary structure comprises 42 residues: EADEPLWLYKGDNIERAPTTADHPILPSIIDDVKLDPNRRYA.

Hemolymph.

Its subcellular location is the secreted. Functionally, antimicrobial protein. Has antibacterial activity against the Gram-positive bacteria M.luteus (MIC=22.7 uM) and L.monocytogenes (MIC=90.9 uM). Lacks antibacterial activity against the Gram-positive bacteria B.circulans, S.aureus, and S.lutea, and the Gram-negative bacteria E.coli D31, E.coli ATCC 25922, and S.typhimurium. Has antifungal activity against A.niger (MIC=90.9 uM) and T.harzianum (MIC=90.9 uM), but lacks antifungal activity against S.cerevisiae, P.pastoris, Z.marxianus, C.albicans, C.fructus, and F.oxysporum. The chain is Lebocin-like anionic peptide 1 from Galleria mellonella (Greater wax moth).